The following is a 457-amino-acid chain: Gamma-aminobutyric acid receptor subunit gamma-4 (457 aa).

A signal peptide spans 1-21 (MPAMVLLLCLALGPALRSARC). Over 22-256 (ESTEEYDYDY…VSFDLSRRMG (235 aa)) the chain is Extracellular. Residues Asn-35 and Asn-112 are each glycosylated (N-linked (GlcNAc...) asparagine). Cys-173 and Cys-187 are disulfide-bonded. Residue Asn-230 is glycosylated (N-linked (GlcNAc...) asparagine). A run of 3 helical transmembrane segments spans residues 257-279 (YFAI…SFWI), 283-305 (STPA…STIS), and 317-339 (AMDL…YATL). Residues 340–433 (NYLVGNKKPL…VRIHISRLDS (94 aa)) lie on the Cytoplasmic side of the membrane. The helical transmembrane segment at 434–457 (YSRVFFPTAFLLFNIVYWIAYLYL) threads the bilayer.

The protein belongs to the ligand-gated ion channel (TC 1.A.9) family. Gamma-aminobutyric acid receptor (TC 1.A.9.5) subfamily. GABRG4 sub-subfamily. Generally pentameric. There are five types of GABA(A) receptor chains: alpha, beta, gamma, delta, and rho. Abundant in several brain regions, including the ectostriatum, nucleus rotundus and hyperstriatum ventrale.

The protein resides in the postsynaptic cell membrane. It localises to the cell membrane. In terms of biological role, GABA, the major inhibitory neurotransmitter in the vertebrate brain, mediates neuronal inhibition by binding to the GABA/benzodiazepine receptor and opening an integral chloride channel. The polypeptide is Gamma-aminobutyric acid receptor subunit gamma-4 (GABRG4) (Gallus gallus (Chicken)).